Here is an 89-residue protein sequence, read N- to C-terminus: Otospiralin (89 aa).

Residues 1–21 (MQACMVPGLALCLLLGPLAGA) form the signal peptide.

It belongs to the otospiralin family. As to expression, ear specific.

The protein resides in the secreted. Functionally, may be essential for the survival of the neurosensory epithelium of the inner ear. This is Otospiralin (OTOS) from Homo sapiens (Human).